Consider the following 60-residue polypeptide: DNA-binding protein 7c (60 aa).

The interval 37–60 (DNGKTGRGAVSEKDAPKELLEKLK) is disordered. Positions 46–60 (VSEKDAPKELLEKLK) are enriched in basic and acidic residues.

The protein belongs to the 7 kDa DNA-binding/endoribonuclease P2 family. Monomer.

The protein resides in the cytoplasm. In terms of biological role, can constrain negative DNA supercoils. May be involved in maintaining the integrity of the genome at high temperature. The protein is DNA-binding protein 7c of Acidianus hospitalis (strain W1).